We begin with the raw amino-acid sequence, 498 residues long: ATP synthase subunit beta, chloroplastic (498 aa).

172 to 179 lines the ATP pocket; the sequence is GGAGVGKT.

Belongs to the ATPase alpha/beta chains family. As to quaternary structure, F-type ATPases have 2 components, CF(1) - the catalytic core - and CF(0) - the membrane proton channel. CF(1) has five subunits: alpha(3), beta(3), gamma(1), delta(1), epsilon(1). CF(0) has four main subunits: a(1), b(1), b'(1) and c(9-12).

It is found in the plastid. Its subcellular location is the chloroplast thylakoid membrane. It carries out the reaction ATP + H2O + 4 H(+)(in) = ADP + phosphate + 5 H(+)(out). Functionally, produces ATP from ADP in the presence of a proton gradient across the membrane. The catalytic sites are hosted primarily by the beta subunits. The protein is ATP synthase subunit beta, chloroplastic of Hyphaene coriacea (Ilala palm).